A 156-amino-acid polypeptide reads, in one-letter code: Small ribosomal subunit protein uS7 (156 aa).

Belongs to the universal ribosomal protein uS7 family. As to quaternary structure, part of the 30S ribosomal subunit. Contacts proteins S9 and S11.

Functionally, one of the primary rRNA binding proteins, it binds directly to 16S rRNA where it nucleates assembly of the head domain of the 30S subunit. Is located at the subunit interface close to the decoding center, probably blocks exit of the E-site tRNA. The chain is Small ribosomal subunit protein uS7 from Campylobacter hominis (strain ATCC BAA-381 / DSM 21671 / CCUG 45161 / LMG 19568 / NCTC 13146 / CH001A).